Consider the following 259-residue polypeptide: Thiazole synthase (259 aa).

Lysine 100 functions as the Schiff-base intermediate with DXP in the catalytic mechanism. 1-deoxy-D-xylulose 5-phosphate-binding positions include glycine 161, 187 to 188 (AG), and 209 to 210 (NT).

It belongs to the ThiG family. In terms of assembly, homotetramer. Forms heterodimers with either ThiH or ThiS.

The protein localises to the cytoplasm. It carries out the reaction [ThiS sulfur-carrier protein]-C-terminal-Gly-aminoethanethioate + 2-iminoacetate + 1-deoxy-D-xylulose 5-phosphate = [ThiS sulfur-carrier protein]-C-terminal Gly-Gly + 2-[(2R,5Z)-2-carboxy-4-methylthiazol-5(2H)-ylidene]ethyl phosphate + 2 H2O + H(+). It participates in cofactor biosynthesis; thiamine diphosphate biosynthesis. In terms of biological role, catalyzes the rearrangement of 1-deoxy-D-xylulose 5-phosphate (DXP) to produce the thiazole phosphate moiety of thiamine. Sulfur is provided by the thiocarboxylate moiety of the carrier protein ThiS. In vitro, sulfur can be provided by H(2)S. In Methylobacillus flagellatus (strain ATCC 51484 / DSM 6875 / VKM B-1610 / KT), this protein is Thiazole synthase.